The primary structure comprises 133 residues: MEEDQELERKMSGVKTSMAEGERKTALEMVQAAGTDRHCVTFVLHEEDHTLGNSLRYMIMKNPEVEFCGYTTTHPSESKINLRIQTRGALPAVEPFQRGLTDLMNVCQHVLDKFEASIKEYKDQKASRNEATF.

The residue at position 1 (M1) is an N-acetylmethionine. The segment at 1–22 (MEEDQELERKMSGVKTSMAEGE) is disordered.

Belongs to the archaeal Rpo11/eukaryotic RPB11/RPC19 RNA polymerase subunit family. As to quaternary structure, component of the RNA polymerase I and RNA polymerase III complexes consisting of at least 13 and 17 subunits, respectively. The transcriptionally active RNA polymerase III complex consists of a ten-subunit horseshoe-shaped catalytic core composed of POLR3A/RPC1, POLR3B/RPC2, POLR1C/RPAC1, POLR1D/RPAC2, POLR3K/RPC10, POLR2E/RPABC1, POLR2F/RPABC2, POLR2H/RPABC3, POLR2K/RPABC4 and POLR2L/RPABC5; a mobile stalk composed of two subunits POLR3H/RPC8 and CRCP/RPC9, protruding from the core and functioning primarily in transcription initiation; and additional subunits homologous to general transcription factors of the RNA polymerase II machinery, POLR3C/RPC3-POLR3F/RPC6-POLR3G/RPC7 heterotrimer required for transcription initiation and POLR3D/RPC4-POLR3E/RPC5 heterodimer involved in both transcription initiation and termination.

It localises to the nucleus. Its function is as follows. DNA-dependent RNA polymerase catalyzes the transcription of DNA into RNA using the four ribonucleoside triphosphates as substrates. Common component of RNA polymerases I and III which synthesize ribosomal RNA precursor pre-rRNA and short non-coding RNAs including 5S rRNA, snRNAs, tRNAs and miRNAs, respectively. This is DNA-directed RNA polymerases I and III subunit RPAC2 (POLR1D) from Bos taurus (Bovine).